We begin with the raw amino-acid sequence, 122 residues long: Small ribosomal subunit protein bS6 (122 aa).

The segment at 97-122 (TAPSPMMKAVQKEDAAKSHRAEAPAA) is disordered. Over residues 106-122 (VQKEDAAKSHRAEAPAA) the composition is skewed to basic and acidic residues.

This sequence belongs to the bacterial ribosomal protein bS6 family.

Functionally, binds together with bS18 to 16S ribosomal RNA. The chain is Small ribosomal subunit protein bS6 from Janthinobacterium sp. (strain Marseille) (Minibacterium massiliensis).